The primary structure comprises 562 residues: DNA ligase (562 aa).

Glutamate 252 serves as a coordination point for ATP. Catalysis depends on lysine 254, which acts as the N6-AMP-lysine intermediate. Residues arginine 259, arginine 274, glutamate 303, phenylalanine 343, arginine 419, and lysine 425 each contribute to the ATP site.

This sequence belongs to the ATP-dependent DNA ligase family. It depends on Mg(2+) as a cofactor.

The enzyme catalyses ATP + (deoxyribonucleotide)n-3'-hydroxyl + 5'-phospho-(deoxyribonucleotide)m = (deoxyribonucleotide)n+m + AMP + diphosphate.. DNA ligase that seals nicks in double-stranded DNA during DNA replication, DNA recombination and DNA repair. This is DNA ligase from Methanococcus aeolicus (strain ATCC BAA-1280 / DSM 17508 / OCM 812 / Nankai-3).